The following is a 336-amino-acid chain: Succinylglutamate desuccinylase (336 aa).

Residues H59, E62, and H151 each contribute to the Zn(2+) site. Residue E215 is part of the active site.

Belongs to the AspA/AstE family. Succinylglutamate desuccinylase subfamily. Zn(2+) is required as a cofactor.

The enzyme catalyses N-succinyl-L-glutamate + H2O = L-glutamate + succinate. It functions in the pathway amino-acid degradation; L-arginine degradation via AST pathway; L-glutamate and succinate from L-arginine: step 5/5. Functionally, transforms N(2)-succinylglutamate into succinate and glutamate. This chain is Succinylglutamate desuccinylase, found in Pseudomonas fluorescens (strain ATCC BAA-477 / NRRL B-23932 / Pf-5).